We begin with the raw amino-acid sequence, 330 residues long: Ketol-acid reductoisomerase (NADP(+)) (330 aa).

The KARI N-terminal Rossmann domain occupies 2-182 (VKIFYDKDVT…GLTKVGVIQT (181 aa)). NADP(+) is bound by residues 25-28 (YGSQ), arginine 48, serine 53, and 83-86 (DEVQ). Histidine 108 is an active-site residue. An NADP(+)-binding site is contributed by glycine 134. The KARI C-terminal knotted domain maps to 183-328 (TFREETETDL…KELRKMCGLE (146 aa)). Positions 191, 195, 227, and 231 each coordinate Mg(2+). Serine 252 provides a ligand contact to substrate.

Belongs to the ketol-acid reductoisomerase family. Requires Mg(2+) as cofactor.

The enzyme catalyses (2R)-2,3-dihydroxy-3-methylbutanoate + NADP(+) = (2S)-2-acetolactate + NADPH + H(+). It catalyses the reaction (2R,3R)-2,3-dihydroxy-3-methylpentanoate + NADP(+) = (S)-2-ethyl-2-hydroxy-3-oxobutanoate + NADPH + H(+). The protein operates within amino-acid biosynthesis; L-isoleucine biosynthesis; L-isoleucine from 2-oxobutanoate: step 2/4. It participates in amino-acid biosynthesis; L-valine biosynthesis; L-valine from pyruvate: step 2/4. Involved in the biosynthesis of branched-chain amino acids (BCAA). Catalyzes an alkyl-migration followed by a ketol-acid reduction of (S)-2-acetolactate (S2AL) to yield (R)-2,3-dihydroxy-isovalerate. In the isomerase reaction, S2AL is rearranged via a Mg-dependent methyl migration to produce 3-hydroxy-3-methyl-2-ketobutyrate (HMKB). In the reductase reaction, this 2-ketoacid undergoes a metal-dependent reduction by NADPH to yield (R)-2,3-dihydroxy-isovalerate. This Methanocaldococcus jannaschii (strain ATCC 43067 / DSM 2661 / JAL-1 / JCM 10045 / NBRC 100440) (Methanococcus jannaschii) protein is Ketol-acid reductoisomerase (NADP(+)).